We begin with the raw amino-acid sequence, 208 residues long: Ribosome maturation factor RimP (208 aa).

It belongs to the RimP family.

The protein localises to the cytoplasm. Its function is as follows. Required for maturation of 30S ribosomal subunits. The protein is Ribosome maturation factor RimP of Bartonella tribocorum (strain CIP 105476 / IBS 506).